We begin with the raw amino-acid sequence, 271 residues long: Signal recognition particle receptor subunit beta (271 aa).

Residues 37-57 (LLSVVVAVLAVLLTLVFWKLI) form a helical membrane-spanning segment. Residues 71-79 (GLCDSGKTL) and 92-95 (TQTS) contribute to the GTP site. At Ser-112 the chain carries Phosphoserine. A GTP-binding site is contributed by Gly-120. Phosphothreonine is present on Thr-214. Ala-248 is a GTP binding site.

This sequence belongs to the SRP receptor beta subunit family. In terms of assembly, heterodimer with SRPRA.

The protein resides in the endoplasmic reticulum membrane. Component of the signal recognition particle (SRP) complex receptor (SR). Ensures, in conjunction with the SRP complex, the correct targeting of the nascent secretory proteins to the endoplasmic reticulum membrane system. May mediate the membrane association of SR. The protein is Signal recognition particle receptor subunit beta (SRPRB) of Homo sapiens (Human).